The primary structure comprises 124 residues: Small ribosomal subunit protein uS12c (124 aa).

Disordered regions lie at residues 1 to 28 (MPTI…KGCP) and 104 to 124 (ASGV…QPKT). 2 stretches are compositionally biased toward basic residues: residues 11 to 20 (ERHKSSKKTK) and 109 to 124 (DRKK…QPKT).

Belongs to the universal ribosomal protein uS12 family. Part of the 30S ribosomal subunit.

The protein resides in the plastid. It is found in the chloroplast. With S4 and S5 plays an important role in translational accuracy. Located at the interface of the 30S and 50S subunits. This is Small ribosomal subunit protein uS12c (rps12) from Gracilaria tenuistipitata var. liui (Red alga).